The following is a 447-amino-acid chain: Pyruvate kinase (447 aa).

R33 provides a ligand contact to substrate. N35, S37, and D61 together coordinate K(+). 35–38 (NMSH) contributes to the ATP binding site. R68 lines the ATP pocket. E203 is a binding site for Mg(2+). Substrate-binding residues include G226, D227, and T259. D227 serves as a coordination point for Mg(2+).

It belongs to the pyruvate kinase family. As to quaternary structure, homotetramer. It depends on Mg(2+) as a cofactor. K(+) is required as a cofactor.

It catalyses the reaction pyruvate + ATP = phosphoenolpyruvate + ADP + H(+). It functions in the pathway carbohydrate degradation; glycolysis; pyruvate from D-glyceraldehyde 3-phosphate: step 5/5. The sequence is that of Pyruvate kinase from Methanocaldococcus jannaschii (strain ATCC 43067 / DSM 2661 / JAL-1 / JCM 10045 / NBRC 100440) (Methanococcus jannaschii).